The following is an 84-amino-acid chain: MSGGSTGERPFSDIITSVRYWVIHSITIPALFVAGWLFVSTGLAYDVFGTPRPNEYFTQDRQQVPLVNDRFNAKQELEDLTKGI.

Residues 22 to 36 (VIHSITIPALFVAGW) traverse the membrane as a helical segment. Residue His-24 coordinates heme.

This sequence belongs to the PsbE/PsbF family. As to quaternary structure, heterodimer of an alpha subunit and a beta subunit. PSII is composed of 1 copy each of membrane proteins PsbA, PsbB, PsbC, PsbD, PsbE, PsbF, PsbH, PsbI, PsbJ, PsbK, PsbL, PsbM, PsbT, PsbX, PsbY, PsbZ, Psb30/Ycf12, at least 3 peripheral proteins of the oxygen-evolving complex and a large number of cofactors. It forms dimeric complexes. Heme b serves as cofactor.

The protein localises to the plastid. It is found in the chloroplast thylakoid membrane. This b-type cytochrome is tightly associated with the reaction center of photosystem II (PSII). PSII is a light-driven water:plastoquinone oxidoreductase that uses light energy to abstract electrons from H(2)O, generating O(2) and a proton gradient subsequently used for ATP formation. It consists of a core antenna complex that captures photons, and an electron transfer chain that converts photonic excitation into a charge separation. This Porphyra purpurea (Red seaweed) protein is Cytochrome b559 subunit alpha.